The sequence spans 743 residues: Isocitrate dehydrogenase [NADP] 2 (743 aa).

The NADP(+) site is built by Asn-87 and Ser-89. 5 residues coordinate D-threo-isocitrate: Ser-134, Asn-137, Arg-141, Arg-147, and Lys-257. Asn-137 contacts NADP(+). Asp-352 is a binding site for Mg(2+). Residues Tyr-422 and Arg-549 each contribute to the D-threo-isocitrate site. Mg(2+) is bound by residues Asp-550 and Asp-554. NADP(+)-binding residues include Ser-587, His-591, Arg-602, Asp-604, and Arg-651.

It belongs to the monomeric-type IDH family. As to quaternary structure, monomer. Mg(2+) is required as a cofactor. Mn(2+) serves as cofactor.

The enzyme catalyses D-threo-isocitrate + NADP(+) = 2-oxoglutarate + CO2 + NADPH. Functionally, catalyzes the oxidative decarboxylation of isocitrate to 2-oxoglutarate and carbon dioxide with the concomitant reduction of NADP(+). The sequence is that of Isocitrate dehydrogenase [NADP] 2 (icd2) from Colwellia maris.